Here is a 304-residue protein sequence, read N- to C-terminus: Putative HTH-type transcriptional regulatory protein Memar_2347 (304 aa).

Residues 132–189 (LREVRERFRMSLGDLASHLGVSRRTISKYESGMGTTLDVAIKLEEIFNAPLVETIELL) form the HTH cro/C1-type domain. A DNA-binding region (H-T-H motif) is located at residues 143–162 (LGDLASHLGVSRRTISKYES).

The polypeptide is Putative HTH-type transcriptional regulatory protein Memar_2347 (Methanoculleus marisnigri (strain ATCC 35101 / DSM 1498 / JR1)).